The primary structure comprises 86 residues: Photosystem I reaction center subunit PsaK (86 aa).

The next 2 helical transmembrane spans lie at 14–34 and 57–77; these read LQWSPTVGLIIIIANIIAIAF and FGLPALLATTAFGHILGVGAV.

The protein belongs to the PsaG/PsaK family.

It localises to the cellular thylakoid membrane. This chain is Photosystem I reaction center subunit PsaK, found in Nostoc punctiforme (strain ATCC 29133 / PCC 73102).